The sequence spans 461 residues: Phosphomethylpyrimidine synthase (461 aa).

Substrate-binding positions include asparagine 81, methionine 110, tyrosine 140, histidine 176, serine 196–glycine 198, aspartate 237–arginine 240, and glutamate 276. Histidine 280 contacts Zn(2+). Tyrosine 303 contacts substrate. Histidine 344 lines the Zn(2+) pocket. [4Fe-4S] cluster-binding residues include cysteine 424, cysteine 427, and cysteine 432.

The protein belongs to the ThiC family. It depends on [4Fe-4S] cluster as a cofactor.

The enzyme catalyses 5-amino-1-(5-phospho-beta-D-ribosyl)imidazole + S-adenosyl-L-methionine = 4-amino-2-methyl-5-(phosphooxymethyl)pyrimidine + CO + 5'-deoxyadenosine + formate + L-methionine + 3 H(+). It functions in the pathway cofactor biosynthesis; thiamine diphosphate biosynthesis. Functionally, catalyzes the synthesis of the hydroxymethylpyrimidine phosphate (HMP-P) moiety of thiamine from aminoimidazole ribotide (AIR) in a radical S-adenosyl-L-methionine (SAM)-dependent reaction. The chain is Phosphomethylpyrimidine synthase from Thermosynechococcus vestitus (strain NIES-2133 / IAM M-273 / BP-1).